We begin with the raw amino-acid sequence, 355 residues long: NADH-quinone oxidoreductase subunit H (355 aa).

The next 8 membrane-spanning stretches (helical) occupy residues 17-37 (IIMV…IAYI), 86-106 (GVFL…WAVI), 119-139 (VGIL…IMAG), 165-185 (IGFV…SAVV), 204-224 (ILNW…VSAL), 262-282 (YVAI…GWLP), 291-311 (WVPG…LFAM), and 332-352 (FLPL…FAGI).

This sequence belongs to the complex I subunit 1 family. As to quaternary structure, NDH-1 is composed of 14 different subunits. Subunits NuoA, H, J, K, L, M, N constitute the membrane sector of the complex.

It is found in the cell inner membrane. It catalyses the reaction a quinone + NADH + 5 H(+)(in) = a quinol + NAD(+) + 4 H(+)(out). NDH-1 shuttles electrons from NADH, via FMN and iron-sulfur (Fe-S) centers, to quinones in the respiratory chain. The immediate electron acceptor for the enzyme in this species is believed to be ubiquinone. Couples the redox reaction to proton translocation (for every two electrons transferred, four hydrogen ions are translocated across the cytoplasmic membrane), and thus conserves the redox energy in a proton gradient. This subunit may bind ubiquinone. This is NADH-quinone oxidoreductase subunit H from Bradyrhizobium diazoefficiens (strain JCM 10833 / BCRC 13528 / IAM 13628 / NBRC 14792 / USDA 110).